A 912-amino-acid chain; its full sequence is Lateral signaling target protein 2 homolog (912 aa).

The span at 323-332 (NVNTSNNSDN) shows a compositional bias: low complexity. Disordered stretches follow at residues 323–360 (NVNTSNNSDNSDSRVDDSPNDELRHESETRDNRNSSFY), 455–610 (ADSG…ESSQ), 664–745 (NSSP…ASSA), and 769–846 (GGGS…APPR). The span at 333 to 355 (SDSRVDDSPNDELRHESETRDNR) shows a compositional bias: basic and acidic residues. Residues 455 to 468 (ADSGLGTANPSVDN) are compositionally biased toward polar residues. Residues 486-505 (SSEEGEIDEYDNEEDDEDSD) are compositionally biased toward acidic residues. The span at 530-544 (YRTHKQQHHHRHRRS) shows a compositional bias: basic residues. Polar residues-rich tracts occupy residues 545-556 (SGSIMSATSSRK) and 572-590 (VPSNQGTSSKTYSNCDTSP). Residues 591-610 (SSGNQSECSSTSSTTGESSQ) show a composition bias toward low complexity. Basic and acidic residues predominate over residues 682–699 (DKPKEPDPTDLFEFRASE). Composition is skewed to polar residues over residues 705-717 (PGQNSGGSSQSIY), 735-745 (PGTSPIRASSA), 780-801 (ERSVSLSETSIVVENNGGATDS), and 822-834 (SRSSPNSPVNGTS). The FYVE-type zinc-finger motif lies at 850–910 (DGDAPRCMAC…VCRDCYVREV (61 aa)). Cysteine 856, cysteine 859, cysteine 872, cysteine 875, cysteine 880, cysteine 883, cysteine 902, and cysteine 905 together coordinate Zn(2+).

This sequence belongs to the lst-2 family.

Its function is as follows. Negative regulator of epidermal growth factor receptor (EGFR) signaling. The polypeptide is Lateral signaling target protein 2 homolog (Aedes aegypti (Yellowfever mosquito)).